Consider the following 427-residue polypeptide: Ribosome biogenesis protein WDR12 homolog (427 aa).

The segment at 13–97 (LQLHLYTKQK…EDTVELEYVE (85 aa)) is ubiquitin-like (UBL) domain. 7 WD repeats span residues 109–146 (LHDD…KLTI), 148–190 (GHIA…NSVE), 197–236 (GHER…DGDS), 260–298 (GHRE…IKSE), 301–339 (GHKS…GTIV), 345–385 (GHTQ…APIF), and 389–427 (GHED…GEQK).

This sequence belongs to the WD repeat WDR12/YTM1 family.

The protein localises to the nucleus. The protein resides in the nucleolus. Its subcellular location is the nucleoplasm. Its function is as follows. Required for maturation of ribosomal RNAs and formation of the large ribosomal subunit. This is Ribosome biogenesis protein WDR12 homolog from Aedes aegypti (Yellowfever mosquito).